The primary structure comprises 159 residues: Putative 4-hydroxy-4-methyl-2-oxoglutarate aldolase (159 aa).

Residues 78 to 81 and Arg-100 each bind substrate; that span reads GDVI. Asp-101 is a binding site for a divalent metal cation.

The protein belongs to the class II aldolase/RraA-like family. In terms of assembly, homotrimer. A divalent metal cation is required as a cofactor.

It catalyses the reaction 4-hydroxy-4-methyl-2-oxoglutarate = 2 pyruvate. It carries out the reaction oxaloacetate + H(+) = pyruvate + CO2. In terms of biological role, catalyzes the aldol cleavage of 4-hydroxy-4-methyl-2-oxoglutarate (HMG) into 2 molecules of pyruvate. Also contains a secondary oxaloacetate (OAA) decarboxylase activity due to the common pyruvate enolate transition state formed following C-C bond cleavage in the retro-aldol and decarboxylation reactions. This is Putative 4-hydroxy-4-methyl-2-oxoglutarate aldolase from Mycobacterium sp. (strain KMS).